Reading from the N-terminus, the 358-residue chain is NADH-quinone oxidoreductase subunit H (358 aa).

8 consecutive transmembrane segments (helical) span residues 29 to 49 (LIKIICVVLPLLGAVAYLTLW), 95 to 115 (GLFYLGPVMAIMPALGAWAVI), 130 to 150 (LLLVMAITSIEVYGVIIAGWA), 176 to 196 (FCFLVVIMVSGSMNLTEIVAV), 206 to 226 (GLGFLSWNWLPLFPIFIVYLI), 258 to 280 (GFAIFFLAEYASMWLVSILAVVM), 297 to 317 (GWIWLGIKTFLVVSMFIWIRA), and 334 to 354 (IFIPVTLVWLLVVGAWLLSPW).

Belongs to the complex I subunit 1 family. NDH-1 is composed of 14 different subunits. Subunits NuoA, H, J, K, L, M, N constitute the membrane sector of the complex.

The protein resides in the cell inner membrane. It catalyses the reaction a quinone + NADH + 5 H(+)(in) = a quinol + NAD(+) + 4 H(+)(out). Its function is as follows. NDH-1 shuttles electrons from NADH, via FMN and iron-sulfur (Fe-S) centers, to quinones in the respiratory chain. The immediate electron acceptor for the enzyme in this species is believed to be ubiquinone. Couples the redox reaction to proton translocation (for every two electrons transferred, four hydrogen ions are translocated across the cytoplasmic membrane), and thus conserves the redox energy in a proton gradient. This subunit may bind ubiquinone. This Acidovorax sp. (strain JS42) protein is NADH-quinone oxidoreductase subunit H.